Reading from the N-terminus, the 911-residue chain is Disks large homolog 1 (911 aa).

Residues 4 to 64 (RKQDTQRALH…FYEVTLLDNP (61 aa)) form the L27 domain. Ser39 carries the post-translational modification Phosphoserine; by CaMK2. Residues 70–105 (SKQCEPVQPGNPWESGSLSSAAVTSESLPGGLSPPV) are disordered. Positions 83–96 (ESGSLSSAAVTSES) are enriched in polar residues. Residues Ser122, Ser138, and Ser158 each carry the phosphoserine modification. The tract at residues 162-212 (PTEAVPPSSPIVPVTPALPVPAESPVVLPSTPQANPPPVLVNTDSLETPTY) is interaction with SH3 domains. 2 consecutive PDZ domains span residues 224–310 (EITL…VKRR) and 318–404 (EIKL…AAKP). Residues 224–545 (EITLERGNSG…QAVTIVAQYR (322 aa)) are required for interaction with MARCHF2. Residue Ser232 is modified to Phosphoserine; by CaMK2. Tyr398 is subject to Phosphotyrosine. Residues 419-441 (TNSSSQSVDNHVSPSSYLGQTPA) show a composition bias toward polar residues. The segment at 419–443 (TNSSSQSVDNHVSPSSYLGQTPASP) is disordered. The region spanning 465-545 (KVVLHRGSTG…QAVTIVAQYR (81 aa)) is the PDZ 3 domain. Phosphoserine is present on residues Ser567, Ser572, Ser574, Ser578, Ser597, Ser618, Ser684, Ser687, and Ser841. An SH3 domain is found at 580 to 650 (KRSLYVRALF…PSKRRVEKKE (71 aa)). Positions 662–696 (KTRGDKGEIPDDMGSKGLKHVTSNASDSESSYHEY) are disordered. A Guanylate kinase-like domain is found at 721–896 (TRPVIILGPM…IYNQVKQIIE (176 aa)).

Belongs to the MAGUK family. Homotetramer. Interacts (via guanylate kinase-like domain) with DLGAP1, DLGAP2, DLGAP3, DLGAP4 and MAP1A. Interacts (via guanylate kinase-like domain) with KIF13B. May interact with HTR2A. Interacts (via PDZ domains) with GRIA1. Interacts (via PDZ domains) with GRIN2A. Interacts (via PDZ domains) with KCND2 and KCND3. Interacts (via PDZ domains) with KCNA1, KCNA2, KCNA3 and KCNA4. Interacts (via PDZ domains) with ADGRA3. Interacts with KCNF1. Interacts with CAMK2. Interacts with cytoskeleton-associated protein EPB41. Interacts with cytoskeleton-associated protein EZR. Found in a complex with KCNA5 and CAV3. Found in a complex with APC and CTNNB1. Interacts (via PDZ domains) with APC. Interacts with CDH1 through binding to PIK3R1. Forms multiprotein complexes with CASK, LIN7A, LIN7B, LIN7C, APBA1, and KCNJ12. Interacts with TOPK. Forms a tripartite complex composed of DLG1, MPP7 and LIN7 (LIN7A or LIN7C). May interact with TJAP1. Interacts with PTEN. Interacts with FRMPD4 (via C-terminus). Interacts with LRFN1 and LRFN2. Interacts with LRFN4 and SFPQ. Interacts (via PDZ domains) with ADGRA2 (via PDZ-binding motif). Interacts with ADAM10; this interaction recruits ADAM10 to the cell membrane during long-term depression in hippocampal neurons. Interacts with DGKI (via PDZ-binding motif). Interacts (via PDZ domains) with MARCHF2 (via PDZ domain); the interaction leads to DLG1 ubiqtuitination and degradation. Interacts (via N-terminus) with MPP3; this interaction connects CADM1 with DLG1 and links CADM1 with the regulatory subunit of phosphoinositide-3-kinase (PI3K) by forming a multiprotein complex and participates in cell spreading. Phosphorylated by MAPK12. Phosphorylation of Ser-39 modulates transport to the plasma membrane. Phosphorylation of Ser-232 regulates association with GRIN2A. Post-translationally, ubiquitinated; by MARCHF2 which results in its degradation. Widely expressed. Strongly expressed in epithelial cells, in the small intestine it is only detected in the vili. Expressed in brain, heart (at protein level), muscle, lung and liver. In the brain it was detected in olfactory bulbs, cerebral cortex, hippocampus, and spinal cord (at protein level).

It is found in the cell membrane. Its subcellular location is the basolateral cell membrane. The protein localises to the endoplasmic reticulum membrane. The protein resides in the postsynaptic density. It localises to the synapse. It is found in the sarcolemma. Its subcellular location is the cell junction. The protein localises to the cytoplasm. The protein resides in the apical cell membrane. Functionally, essential multidomain scaffolding protein required for normal development. Recruits channels, receptors and signaling molecules to discrete plasma membrane domains in polarized cells. Promotes epithelial cell layer barrier function via maintaining cell-cell adhesion. May play a role in adherens junction assembly, signal transduction, cell proliferation, synaptogenesis and lymphocyte activation. Regulates the excitability of cardiac myocytes by modulating the functional expression of Kv4 channels. Functional regulator of Kv1.5 channel. During long-term depression in hippocampal neurons, it recruits ADAM10 to the plasma membrane. The sequence is that of Disks large homolog 1 from Rattus norvegicus (Rat).